The sequence spans 208 residues: N-(5'-phosphoribosyl)anthranilate isomerase (208 aa).

The protein belongs to the TrpF family.

The catalysed reaction is N-(5-phospho-beta-D-ribosyl)anthranilate = 1-(2-carboxyphenylamino)-1-deoxy-D-ribulose 5-phosphate. Its pathway is amino-acid biosynthesis; L-tryptophan biosynthesis; L-tryptophan from chorismate: step 3/5. The sequence is that of N-(5'-phosphoribosyl)anthranilate isomerase from Methanothrix thermoacetophila (strain DSM 6194 / JCM 14653 / NBRC 101360 / PT) (Methanosaeta thermophila).